The following is a 1155-amino-acid chain: RhoGEF domain-containing protein gxcJ (1155 aa).

Disordered regions lie at residues 114 to 216, 259 to 333, 429 to 460, 484 to 508, and 604 to 639; these read ENNS…NFLK, LNKK…IPSN, LVSQ…DSLE, LNNE…TTTT, and SNSN…NNYQ. 3 stretches are compositionally biased toward low complexity: residues 115–153, 161–211, and 260–303; these read NNSI…TNNN, TITN…NNNN, and NKKS…NNNN. A coiled-coil region spans residues 192 to 257; it reads NNNNNNNNNN…KDIEKLNSAL (66 aa). Positions 304–319 are enriched in polar residues; the sequence is YKPTITSSQTQPSLME. Residues 320–330 are compositionally biased toward basic and acidic residues; it reads NSKDIDKKEKI. The span at 441 to 457 shows a compositional bias: low complexity; sequence FLASASSSSTTTITTTD. Over residues 604–637 the composition is skewed to low complexity; that stretch reads SNSNSSNNNNSNSNNITNSNSSSFSKKNSNNNNN. One can recognise a DH domain in the interval 700 to 874; the sequence is HRTNLIKEIL…EKIVGTINSQ (175 aa). The tract at residues 1084–1155 is disordered; it reads SHRLSIPSTS…LVKSLVNIKT (72 aa). 2 stretches are compositionally biased toward low complexity: residues 1093-1121 and 1128-1137; these read SSPN…GSPN and QQQQLQQQQQ.

In terms of biological role, GTPase-activating protein. The chain is RhoGEF domain-containing protein gxcJ (gxcJ) from Dictyostelium discoideum (Social amoeba).